The following is a 433-amino-acid chain: Ribosomal RNA small subunit methyltransferase B (433 aa).

S-adenosyl-L-methionine contacts are provided by residues 254–260 (CAAPGGK), D277, D303, and D322. C375 acts as the Nucleophile in catalysis.

It belongs to the class I-like SAM-binding methyltransferase superfamily. RsmB/NOP family.

It is found in the cytoplasm. It catalyses the reaction cytidine(967) in 16S rRNA + S-adenosyl-L-methionine = 5-methylcytidine(967) in 16S rRNA + S-adenosyl-L-homocysteine + H(+). Functionally, specifically methylates the cytosine at position 967 (m5C967) of 16S rRNA. The chain is Ribosomal RNA small subunit methyltransferase B from Sodalis glossinidius (strain morsitans).